Here is a 446-residue protein sequence, read N- to C-terminus: Maltoporin (446 aa).

A signal peptide spans 1 to 25 (MMTTLRKLPLAVAVAAGMMSVQAMA).

This sequence belongs to the porin LamB (TC 1.B.3) family. As to quaternary structure, homotrimer formed of three 18-stranded antiparallel beta-barrels, containing three independent channels.

The protein localises to the cell outer membrane. It carries out the reaction beta-maltose(in) = beta-maltose(out). In terms of biological role, involved in the transport of maltose and maltodextrins. The protein is Maltoporin of Escherichia fergusonii (strain ATCC 35469 / DSM 13698 / CCUG 18766 / IAM 14443 / JCM 21226 / LMG 7866 / NBRC 102419 / NCTC 12128 / CDC 0568-73).